Reading from the N-terminus, the 262-residue chain is 2-keto-4-pentenoate hydratase 2 (262 aa).

This sequence belongs to the hydratase/decarboxylase family. MhpD subfamily. A divalent metal cation serves as cofactor.

It carries out the reaction (S)-4-hydroxy-2-oxopentanoate = (2Z)-2-hydroxypenta-2,4-dienoate + H2O. Its pathway is aromatic compound metabolism; 3-phenylpropanoate degradation. In terms of biological role, catalyzes the conversion of 2-hydroxypentadienoic acid (enolic form of 2-oxopent-4-enoate) to 4-hydroxy-2-ketopentanoic acid. This chain is 2-keto-4-pentenoate hydratase 2, found in Dechloromonas aromatica (strain RCB).